A 101-amino-acid chain; its full sequence is Small ubiquitin-related modifier 1 (101 aa).

Position 2 is an N-acetylserine (S2). S2 bears the Phosphoserine mark. K7 participates in a covalent cross-link: Glycyl lysine isopeptide (Lys-Gly) (interchain with G-Cter in SUMO1); alternate. K7 is covalently cross-linked (Glycyl lysine isopeptide (Lys-Gly) (interchain with G-Cter in SUMO2); alternate). S9 carries the phosphoserine modification. Glycyl lysine isopeptide (Lys-Gly) (interchain with G-Cter in SUMO2) cross-links involve residues K16, K17, and K23. One can recognise a Ubiquitin-like domain in the interval 20-97 (EYIKLKVIGQ…IEVYHEQTGG (78 aa)). Residue K25 forms a Glycyl lysine isopeptide (Lys-Gly) (interchain with G-Cter in SUMO1) linkage. Residue S32 is modified to Phosphoserine. Residues K37, K39, K45, and K46 each participate in a glycyl lysine isopeptide (Lys-Gly) (interchain with G-Cter in SUMO2) cross-link. Residue G97 forms a Glycyl lysine isopeptide (Gly-Lys) (interchain with K-? in acceptor proteins) linkage. Positions 98 to 101 (HSTV) are excised as a propeptide.

This sequence belongs to the ubiquitin family. SUMO subfamily. In terms of assembly, covalently attached to KCNB1; UBE2I increases cross-linking with KCNB1 and PIAS1 decreases cross-links with KCNB1. Interacts with SAE2, RANBP2, PIAS1 and PIAS2. Interacts with PRKN. Covalently attached to a number of proteins such as IKFZ1, PML, RANGAP1, HIPK2, SP100, p53, p73-alpha, MDM2, JUN, DNMT3B and TDG. Also interacts with HIF1A, HIPK2, HIPK3, CHD3, EXOSC9, RAD51 and RAD52. Interacts with USP25 (via ts SIM domain); the interaction weakly sumoylates USP25. Interacts with SIMC1, CASP8AP2, RNF111 and SOBP (via SIM domains). Interacts with BHLHE40/DEC1. Interacts with RWDD3. Interacts with UBE2I/UBC9 and this interaction is enhanced in the presence of RWDD3. Interacts with MTA1. Interacts with SENP2. Interacts with HINT1. Cleavage of precursor form by SENP1, SENP2 is necessary for function. Post-translationally, polymeric SUMO1 chains undergo polyubiquitination by RNF4.

The protein resides in the nucleus membrane. The protein localises to the nucleus speckle. Its subcellular location is the cytoplasm. It is found in the nucleus. It localises to the PML body. The protein resides in the cell membrane. In terms of biological role, ubiquitin-like protein that can be covalently attached to proteins as a monomer or a lysine-linked polymer. Covalent attachment via an isopeptide bond to its substrates requires prior activation by the E1 complex SAE1-SAE2 and linkage to the E2 enzyme UBE2I, and can be promoted by E3 ligases such as PIAS1-4, RANBP2 or CBX4. This post-translational modification on lysine residues of proteins plays a crucial role in a number of cellular processes such as nuclear transport, DNA replication and repair, mitosis and signal transduction. Involved for instance in targeting RANGAP1 to the nuclear pore complex protein RANBP2. Covalently attached to the voltage-gated potassium channel KCNB1; this modulates the gating characteristics of KCNB1. Polymeric SUMO1 chains are also susceptible to polyubiquitination which functions as a signal for proteasomal degradation of modified proteins. May also regulate a network of genes involved in palate development. Covalently attached to ZFHX3. This is Small ubiquitin-related modifier 1 (SUMO1) from Cervus nippon (Sika deer).